Reading from the N-terminus, the 356-residue chain is MAISFQLLPELPVGVKHGVGGIIGQKLYAGLGSSGNAFFVLDLKDMNSGWKSAADFPGIARNDAAYTVCGNKLYVFSGAGIEGNNSFPTVLMDGYVFDSQINQWKRLERTLPTGFLGASCCSLSPTEIIFFGGYDKDTFNNFLSEISKIDVTKEPNKYKELITIFMSQPIDNYNWNKNVWSFTPCNEHWSVVGENPFKPNCGSGIIHKNNVVTLIEGEVKPGLRSLETKRYLFKEGKLEYSDSSASIIDICKNHEGLAGHFFGEIDNKIIVIGGAYFIGSQDAFIKGNLYAHNGLIKHFSSNVWIFDGKSWENKCQLDAAGIAYGVSASNGKAMYVLGGENSNGDAMTRCLSLLMD.

4 Kelch repeats span residues 72–125 (KLYV…SLSP), 163–210 (TIFM…HKNN), 288–331 (NLYA…ASNG), and 333–355 (AMYV…SLLM).

The sequence is that of Kelch domain-containing protein VC_1773 from Vibrio cholerae serotype O1 (strain ATCC 39315 / El Tor Inaba N16961).